Here is a 145-residue protein sequence, read N- to C-terminus: Transcription antitermination protein NusB (145 aa).

This sequence belongs to the NusB family.

Involved in transcription antitermination. Required for transcription of ribosomal RNA (rRNA) genes. Binds specifically to the boxA antiterminator sequence of the ribosomal RNA (rrn) operons. In Geotalea daltonii (strain DSM 22248 / JCM 15807 / FRC-32) (Geobacter daltonii), this protein is Transcription antitermination protein NusB.